We begin with the raw amino-acid sequence, 1083 residues long: Ubiquitin-protein ligase E3C (1083 aa).

Composition is skewed to basic and acidic residues over residues 1-10 and 20-40; these read MFSFEGDFKT and SRKE…RKRE. The tract at residues 1 to 40 is disordered; it reads MFSFEGDFKTRPKVSLGGASRKEEKASLLHRTQEERRKRE. The tract at residues 1 to 60 is cis-determinant of acceptor ubiquitin-binding; sequence MFSFEGDFKTRPKVSLGGASRKEEKASLLHRTQEERRKREEERRRLKNAIIIQSFIRGYR. One can recognise an IQ domain in the interval 45 to 74; sequence RLKNAIIIQSFIRGYRDRKQQYSIQRSAFD. Residues 355–385 are disordered; sequence SPASASCHDSASDSEEESEEADKPSSPEDGR. Over residues 375 to 385 the composition is skewed to basic and acidic residues; it reads ADKPSSPEDGR. The 340-residue stretch at 744-1083 folds into the HECT domain; the sequence is NEPDLKKRIR…IECAAGFELS (340 aa). A Glycyl lysine isopeptide (Lys-Gly) (interchain with G-Cter in ubiquitin); by autocatalysis cross-link involves residue Lys-903. Cys-1051 (glycyl thioester intermediate) is an active-site residue.

Belongs to the UBE3C family. As to quaternary structure, interacts with 26S proteasomes. Interacts (via the HECT domain) with UBE2D1 and, less efficiently, with UBE2L3. Post-translationally, autoubiquitinated; promoting its own degradation. In terms of tissue distribution, highly expressed in skeletal muscle. Detected at much lower levels in kidney and pancreas.

It carries out the reaction S-ubiquitinyl-[E2 ubiquitin-conjugating enzyme]-L-cysteine + [acceptor protein]-L-lysine = [E2 ubiquitin-conjugating enzyme]-L-cysteine + N(6)-ubiquitinyl-[acceptor protein]-L-lysine.. The protein operates within protein modification; protein ubiquitination. Functionally, E3 ubiquitin-protein ligase that specifically catalyzes 'Lys-29'- and 'Lys-48'-linked polyubiquitin chains. Accepts ubiquitin from the E2 ubiquitin-conjugating enzyme UBE2D1 in the form of a thioester and then directly transfers the ubiquitin to targeted substrates. Associates with the proteasome and promotes elongation of ubiquitin chains on substrates bound to the 26S proteasome. Also catalyzes 'Lys-29'- and 'Lys-48'-linked ubiquitination of 26S proteasome subunit ADRM1/RPN13 in response to proteotoxic stress, impairing the ability of the proteasome to bind and degrade ubiquitin-conjugated proteins. Acts as a negative regulator of autophagy by mediating 'Lys-29'- and 'Lys-48'-linked ubiquitination of PIK3C3/VPS34, promoting its degradation. Can assemble unanchored poly-ubiquitin chains in either 'Lys-29'- or 'Lys-48'-linked polyubiquitin chains; with some preference for 'Lys-48' linkages. Acts as a negative regulator of type I interferon by mediating 'Lys-48'-linked ubiquitination of IRF3 and IRF7, leading to their degradation by the proteasome. Catalyzes ubiquitination and degradation of CAND2. This chain is Ubiquitin-protein ligase E3C, found in Homo sapiens (Human).